Here is a 406-residue protein sequence, read N- to C-terminus: Protrudin (406 aa).

The Cytoplasmic segment spans residues 1 to 71; it reads MQAAERDGVA…AAEGVRALLR (71 aa). The segment at 1–97 is sufficient for homooligomerization; the sequence is MQAAERDGVA…LLLTLDQAAW (97 aa). A sufficient for localization to endoplasmic reticulum tubular network region spans residues 1 to 210; that stretch reads MQAAERDGVA…LYLLPLCWVM (210 aa). The chain crosses the membrane as a helical span at residues 72–92; that stretch reads WQRPLCSLLVCLGLNFLLLTL. Position 93 (D93) is a topological domain, lumenal. A helical transmembrane segment spans residues 94–114; that stretch reads QAAWYSVLALLVLLPALLGYL. At 115–192 the chain is on the cytoplasmic side; it reads QETYRVRPSE…NPTVSSQFYG (78 aa). Positions 193-213 form an intramembrane region, helical; that stretch reads ALLGSVCILYLLPLCWVMAIL. The Cytoplasmic segment spans residues 214-406; that stretch reads NSTLFLGNSQ…CAQCNQMLIK (193 aa). The segment at 239–295 is disordered; the sequence is LGTKPLESAPEPAKPLPTDAPPDRTPTPTSTEDLTPGSVEEAEEAEPDEEFKDAIEE. A compositionally biased stretch (pro residues) spans 250-263; it reads PAKPLPTDAPPDRT. The segment covering 278 to 295 has biased composition (acidic residues); it reads EEAEEAEPDEEFKDAIEE. An FYVE-type zinc finger spans residues 339–405; it reads SNNFGTCTGC…VCAQCNQMLI (67 aa). Residues C345, C348, C361, C364, C369, C372, C397, and C400 each coordinate Zn(2+).

As to quaternary structure, can form homooligomers (monomers, dimers and tetramers).

The protein localises to the recycling endosome membrane. Its subcellular location is the endoplasmic reticulum membrane. The protein resides in the cell projection. It is found in the growth cone membrane. Key regulator of RAB11-dependent vesicular trafficking during neurite extension through polarized membrane transport. Promotes axonal elongation and contributes to the establishment of neuronal cell polarity. Involved in nerve growth factor-induced neurite formation in VAPA-dependent manner. Contributes to both the formation and stabilization of the tubular ER network. Involved in ER morphogenesis by regulating the sheet-to-tubule balance and possibly the density of tubule interconnections. This Gallus gallus (Chicken) protein is Protrudin (ZFYVE27).